The primary structure comprises 240 residues: Serine protease SplB (240 aa).

An N-terminal signal peptide occupies residues 1 to 36 (MNKNVVIKSLAALTILTSVTGIGTTLVEEVQQTAKA). Residues His75, Asp113, and Ser193 each act as charge relay system in the active site.

Belongs to the peptidase S1B family.

The protein resides in the secreted. Serine protease that cleaves specifically after the sequence Trp-Glu-Leu-Gln. The chain is Serine protease SplB (splB) from Staphylococcus aureus (strain USA300).